We begin with the raw amino-acid sequence, 268 residues long: Small ribosomal subunit protein uS10m (268 aa).

Residues 1–64 constitute a mitochondrion transit peptide; it reads MIIRPVVRSL…RITTTTEAPK (64 aa).

It belongs to the universal ribosomal protein uS10 family. As to quaternary structure, component of the mitochondrial small ribosomal subunit (mt-SSU). Mature N.crassa 74S mitochondrial ribosomes consist of a small (37S) and a large (54S) subunit. The 37S small subunit contains a 16S ribosomal RNA (16S mt-rRNA) and 32 different proteins. The 54S large subunit contains a 23S rRNA (23S mt-rRNA) and 42 different proteins.

Its subcellular location is the mitochondrion. Component of the mitochondrial ribosome (mitoribosome), a dedicated translation machinery responsible for the synthesis of mitochondrial genome-encoded proteins, including at least some of the essential transmembrane subunits of the mitochondrial respiratory chain. The mitoribosomes are attached to the mitochondrial inner membrane and translation products are cotranslationally integrated into the membrane. The sequence is that of Small ribosomal subunit protein uS10m (mrp-10) from Neurospora crassa (strain ATCC 24698 / 74-OR23-1A / CBS 708.71 / DSM 1257 / FGSC 987).